Here is a 66-residue protein sequence, read N- to C-terminus: Phylloseptin-S4 (66 aa).

The N-terminal stretch at 1–22 (MAFLKKSLFLVLFLGLVSLSIC) is a signal peptide. A propeptide spanning residues 23-46 (EEEKRETEEEEHDQEEDDKSEEKR) is cleaved from the precursor. Residues 25-44 (EKRETEEEEHDQEEDDKSEE) are disordered. Acidic residues predominate over residues 30 to 41 (EEEEHDQEEDDK). Position 65 is a leucine amide (Leu-65).

In terms of tissue distribution, expressed by the skin glands.

The protein localises to the secreted. The protein resides in the target cell membrane. Functionally, antimicrobial peptide with high activity against Gram-positive bacteria, moderate activity against Gram-negative bacteria, and moderate activity against fungi. Acts by causing bacterial membrane disruption inducing leakage of the intracellular content followed by cell death. It adopts an alpha-helical amphipathic structure in membrane environments. Also shows highly potent antiparasitic activity against Leishmania species. Shows moderate hemolytic activity on human erythrocytes (LC(50)=33 uM). Is also active on human monocytes (IC(50)=23 uM). The protein is Phylloseptin-S4 of Phyllomedusa sauvagei (Sauvage's leaf frog).